Here is a 125-residue protein sequence, read N- to C-terminus: Large ribosomal subunit protein bL12 (125 aa).

It belongs to the bacterial ribosomal protein bL12 family. Homodimer. Part of the ribosomal stalk of the 50S ribosomal subunit. Forms a multimeric L10(L12)X complex, where L10 forms an elongated spine to which 2 to 4 L12 dimers bind in a sequential fashion. Binds GTP-bound translation factors.

Functionally, forms part of the ribosomal stalk which helps the ribosome interact with GTP-bound translation factors. Is thus essential for accurate translation. This chain is Large ribosomal subunit protein bL12, found in Rhizobium leguminosarum bv. trifolii (strain WSM2304).